The sequence spans 485 residues: Protein disulfide-isomerase 1 (485 aa).

Residues 1 to 20 form the signal peptide; that stretch reads MSLSVSFIFLLVASIGAVVA. Thioredoxin domains follow at residues 21–130 and 342–470; these read DSEN…KKSG and YLEG…KYAG. Intrachain disulfides connect Cys-52-Cys-55 and Cys-393-Cys-396. Residues Cys-393 and Cys-396 each act as nucleophile in the active site. Positions 482–485 match the Prevents secretion from ER motif; the sequence is HEEL.

This sequence belongs to the protein disulfide isomerase family.

Its subcellular location is the endoplasmic reticulum lumen. The catalysed reaction is Catalyzes the rearrangement of -S-S- bonds in proteins.. This Caenorhabditis elegans protein is Protein disulfide-isomerase 1 (pdi-1).